The primary structure comprises 99 residues: DASH complex subunit DAD1 (99 aa).

A disordered region spans residues 69-99 (GMNHQTRENTRDENNKISSSDTEDENNNNKI). Residues 73-83 (QTRENTRDENN) are compositionally biased toward basic and acidic residues. Residues 89–99 (DTEDENNNNKI) show a composition bias toward acidic residues.

Belongs to the DASH complex DAD1 family. As to quaternary structure, component of the DASH complex consisting of ASK1, DAD1, DAD2, DAD3, DAD4, DAM1, DUO1, HSK3, SPC19 and SPC34, with a stoichiometry of one copy of each subunit per complex. Multiple DASH complexes oligomerize to form a ring that encircles spindle microtubules and organizes the rod-like NDC80 complexes of the outer kinetochore. DASH complex oligomerization strengthens microtubule attachments. On cytoplasmic microtubules, DASH complexes appear to form patches instead of rings.

Its subcellular location is the chromosome. The protein resides in the centromere. It localises to the kinetochore. It is found in the cytoplasm. The protein localises to the cytoskeleton. Its subcellular location is the spindle. The protein resides in the nucleus. Functionally, component of the DASH complex that connects microtubules with kinetochores and couples microtubule depolymerisation to chromosome movement; it is involved in retrieving kinetochores to the spindle poles before their re-orientation on the spindle in early mitosis and allows microtubule depolymerization to pull chromosomes apart and resist detachment during anaphase. Kinetochores, consisting of a centromere-associated inner segment and a microtubule-contacting outer segment, play a crucial role in chromosome segregation by mediating the physical connection between centromeric DNA and microtubules. Kinetochores also serve as an input point for the spindle assembly checkpoint, which delays anaphase until all chromosomes have bioriented on the mitotic spindle. The protein is DASH complex subunit DAD1 of Candida albicans (strain SC5314 / ATCC MYA-2876) (Yeast).